Reading from the N-terminus, the 904-residue chain is Phosphoenolpyruvate carboxylase (904 aa).

The tract at residues 52 to 71 (ISRRESDAPPSTLSEQLTGR) is disordered. Active-site residues include H151 and K570.

This sequence belongs to the PEPCase type 1 family. Requires Mg(2+) as cofactor.

It carries out the reaction oxaloacetate + phosphate = phosphoenolpyruvate + hydrogencarbonate. In terms of biological role, forms oxaloacetate, a four-carbon dicarboxylic acid source for the tricarboxylic acid cycle. In Xanthomonas oryzae pv. oryzae (strain MAFF 311018), this protein is Phosphoenolpyruvate carboxylase.